The sequence spans 763 residues: Phosphoglycerol transferase I (763 aa).

4 helical membrane passes run 1–21, 26–46, 77–97, and 108–128; these read MSELLSVALFLASVLIYAWKA, WWFAATLTVLGLFVILNITLY, ILPGIGIALALVAVFGALGWV, and VGYSLLALLLALGSVDASPAF.

Belongs to the OpgB family.

The protein resides in the cell inner membrane. The catalysed reaction is a phosphatidylglycerol + a membrane-derived-oligosaccharide D-glucose = a 1,2-diacyl-sn-glycerol + a membrane-derived-oligosaccharide 6-(glycerophospho)-D-glucose.. It functions in the pathway glycan metabolism; osmoregulated periplasmic glucan (OPG) biosynthesis. In terms of biological role, transfers a phosphoglycerol residue from phosphatidylglycerol to the membrane-bound nascent glucan backbones. In Salmonella schwarzengrund (strain CVM19633), this protein is Phosphoglycerol transferase I.